The sequence spans 733 residues: Cyclic nucleotide-gated channel (733 aa).

Disordered stretches follow at residues 1-33 and 67-95; these read MSTA…PTAS and PNGN…IEVP. Over 1 to 125 the chain is Cytoplasmic; the sequence is MSTAEPAPDP…PSTDNFYYWT (125 aa). Residues 12 to 25 are compositionally biased toward polar residues; it reads NPSTSGLAPTTNGI. A helical transmembrane segment spans residues 126 to 148; that stretch reads CVVTVAYIYNLLFVIARQVFNDL. The Extracellular portion of the chain corresponds to 149 to 197; the sequence is IGPSSQSLCRFYNGTLNSTTQVECTYNMLTNMKEMPTYSQYPDLGWSKY. Residues 198-217 form a helical membrane-spanning segment; sequence WHFRMLWVFFDLLMDCVYLI. Residues 218 to 251 are Cytoplasmic-facing; the sequence is DTFLNYRMGYMDQGLVVREAEKVTKAYWQSKQYR. The chain crosses the membrane as a helical span at residues 252–265; sequence IDGISLIPLDYILG. The Extracellular segment spans residues 266-276; the sequence is WPIPYINWRGL. The helical transmembrane segment at 277–287 threads the bilayer; it reads PILRLNRLIRY. Over 288–308 the chain is Cytoplasmic; that stretch reads KRVRNCLERTETRSSMPNAFR. A helical transmembrane segment spans residues 309–331; that stretch reads VVVVVWYIVIIIHWNACLYFWIS. Residues 332-362 lie on the Extracellular side of the membrane; that stretch reads EWIGLGTDAWVYGHLNKQSLPDDITDTLLRR. 2 helical membrane-spanning segments follow: residues 363–385 and 386–411; these read YVYS…SPVR and NIEY…GNVG. Positions 376 to 379 are selectivity filter; sequence TIGE. Glutamate 379 is a Na(+) binding site. Residues 412–733 are Cytoplasmic-facing; it reads SMISNMSAAR…TGTESESLLK (322 aa). A C-linker region spans residues 419 to 496; it reads AARTEFQNKM…TLRKVRIFQD (78 aa). Residues 493-607 form a cyclic nucleotide-binding domain region; that stretch reads IFQDCEAGLL…ALREYPDARK (115 aa). Glycine 559 lines the 3',5'-cyclic GMP pocket. Residue glutamate 560 coordinates 3',5'-cyclic AMP. Residues serine 562, arginine 575, threonine 576, lysine 619, and aspartate 620 each coordinate 3',5'-cyclic GMP. 3',5'-cyclic AMP is bound at residue arginine 575. Residues 694-733 are disordered; the sequence is SIDGGDISTDGVDERVRPPRLRQTKTIDLPTGTESESLLK.

This sequence belongs to the cyclic nucleotide-gated cation channel (TC 1.A.1.5) family. As to quaternary structure, homotetramer. In terms of tissue distribution, expressed at the sensory endings of thermosensory, gustatory, and olfactory neurons.

The protein resides in the cell membrane. The protein localises to the cell projection. It is found in the cilium. The enzyme catalyses Ca(2+)(in) = Ca(2+)(out). It catalyses the reaction Na(+)(in) = Na(+)(out). The catalysed reaction is K(+)(in) = K(+)(out). Functionally, pore-forming subunit of the cyclic nucleotide-gated channel. Required for normal thermosensation and chemosensation sensory behavior. Required, downstream of receptor-type guanylate cyclase gcy-9, for CO2-mediated responses in BAG neurons. Required, downstream of receptor-type guanylate cyclase gcy-14, for alkaline pH-mediated responses in ASE-left (ASEL) neurons. Involved in the development of ASJ sensory neuron axon during late larval stages and in the maintenance of normal axon morphology in the adult. Regulates dauer formation. Required for the calcium flux to the cytoplasm in the ASJ sensory neurons upon the onset and removal of a nitric oxide (NO) stimulus, thereby promoting the ASJ-mediated behavioral avoidance response to NO-producing organisms like P.aeruginosa. In ASI and ASJ sensory neurons, controls behavioral response to P.aeruginosa by up-regulating the transcription of daf-7, a member of the TGF-beta family. In AWB and AWC sensory neurons, mediates the recognition of food odors which subsequently allows for the detection of preferred food sources. In AWC neurons, acts to promote expression of srsx-3, a member of the GPCR family. Binding to cGMP results in conformational changes at the hydrophobic gate that converts the protein from an inactive closed state to an active open state. This chain is Cyclic nucleotide-gated channel (tax-4), found in Caenorhabditis elegans.